A 328-amino-acid polypeptide reads, in one-letter code: Lipoyl synthase (328 aa).

[4Fe-4S] cluster is bound by residues cysteine 56, cysteine 61, cysteine 67, cysteine 82, cysteine 86, cysteine 89, and serine 293. Residues 68–282 (WEDREATFLI…ERVGAELGFS (215 aa)) form the Radical SAM core domain.

The protein belongs to the radical SAM superfamily. Lipoyl synthase family. [4Fe-4S] cluster is required as a cofactor.

The protein resides in the cytoplasm. It catalyses the reaction [[Fe-S] cluster scaffold protein carrying a second [4Fe-4S](2+) cluster] + N(6)-octanoyl-L-lysyl-[protein] + 2 oxidized [2Fe-2S]-[ferredoxin] + 2 S-adenosyl-L-methionine + 4 H(+) = [[Fe-S] cluster scaffold protein] + N(6)-[(R)-dihydrolipoyl]-L-lysyl-[protein] + 4 Fe(3+) + 2 hydrogen sulfide + 2 5'-deoxyadenosine + 2 L-methionine + 2 reduced [2Fe-2S]-[ferredoxin]. Its pathway is protein modification; protein lipoylation via endogenous pathway; protein N(6)-(lipoyl)lysine from octanoyl-[acyl-carrier-protein]: step 2/2. Functionally, catalyzes the radical-mediated insertion of two sulfur atoms into the C-6 and C-8 positions of the octanoyl moiety bound to the lipoyl domains of lipoate-dependent enzymes, thereby converting the octanoylated domains into lipoylated derivatives. This Frankia alni (strain DSM 45986 / CECT 9034 / ACN14a) protein is Lipoyl synthase.